Consider the following 177-residue polypeptide: Large ribosomal subunit protein uL6 (177 aa).

The protein belongs to the universal ribosomal protein uL6 family. As to quaternary structure, part of the 50S ribosomal subunit.

This protein binds to the 23S rRNA, and is important in its secondary structure. It is located near the subunit interface in the base of the L7/L12 stalk, and near the tRNA binding site of the peptidyltransferase center. This is Large ribosomal subunit protein uL6 from Psychrobacter arcticus (strain DSM 17307 / VKM B-2377 / 273-4).